Here is a 287-residue protein sequence, read N- to C-terminus: ATP synthase gamma chain (287 aa).

Belongs to the ATPase gamma chain family. F-type ATPases have 2 components, CF(1) - the catalytic core - and CF(0) - the membrane proton channel. CF(1) has five subunits: alpha(3), beta(3), gamma(1), delta(1), epsilon(1). CF(0) has three main subunits: a, b and c.

The protein resides in the cell inner membrane. Produces ATP from ADP in the presence of a proton gradient across the membrane. The gamma chain is believed to be important in regulating ATPase activity and the flow of protons through the CF(0) complex. The chain is ATP synthase gamma chain from Xanthomonas campestris pv. campestris (strain B100).